Here is a 410-residue protein sequence, read N- to C-terminus: Metacaspase-1 (410 aa).

Positions 1 to 94 (MFPGSGRQTY…RQSGAMNDVS (94 aa)) are disordered. Composition is skewed to low complexity over residues 21–47 (APQY…YNGP) and 55–64 (NYNYGHYGPP). The segment covering 65–75 (QGQGQGYGQGG) has biased composition (gly residues). A compositionally biased stretch (polar residues) spans 80-94 (MYNNNRQSGAMNDVS). Residues His200 and Cys256 contribute to the active site.

Belongs to the peptidase C14B family.

Functionally, involved in cell death (apoptosis). The chain is Metacaspase-1 (MCA1) from Meyerozyma guilliermondii (strain ATCC 6260 / CBS 566 / DSM 6381 / JCM 1539 / NBRC 10279 / NRRL Y-324) (Yeast).